A 223-amino-acid polypeptide reads, in one-letter code: Large ribosomal subunit protein bL21 (223 aa).

The disordered stretch occupies residues 110-149 (TALKSTTAEPKAADAPKAKAKAAPKAEKAAAPKAEKAPAK). The span at 133–147 (PKAEKAAAPKAEKAP) shows a compositional bias: basic and acidic residues.

Belongs to the bacterial ribosomal protein bL21 family. Part of the 50S ribosomal subunit. Contacts protein L20.

Its function is as follows. This protein binds to 23S rRNA in the presence of protein L20. This chain is Large ribosomal subunit protein bL21, found in Maricaulis maris (strain MCS10) (Caulobacter maris).